The following is a 332-amino-acid chain: Glyceraldehyde-3-phosphate dehydrogenase 1 (332 aa).

NAD(+)-binding positions include 11-12, D33, and R78; that span reads RI. D-glyceraldehyde 3-phosphate contacts are provided by residues 149–151, T180, 209–210, and R232; these read SCT and TG. Catalysis depends on C150, which acts as the Nucleophile. N314 lines the NAD(+) pocket.

The protein belongs to the glyceraldehyde-3-phosphate dehydrogenase family. Homotetramer.

The protein localises to the cytoplasm. It catalyses the reaction D-glyceraldehyde 3-phosphate + phosphate + NAD(+) = (2R)-3-phospho-glyceroyl phosphate + NADH + H(+). It functions in the pathway carbohydrate degradation; glycolysis; pyruvate from D-glyceraldehyde 3-phosphate: step 1/5. In Candida glabrata (strain ATCC 2001 / BCRC 20586 / JCM 3761 / NBRC 0622 / NRRL Y-65 / CBS 138) (Yeast), this protein is Glyceraldehyde-3-phosphate dehydrogenase 1 (GPD1).